A 136-amino-acid chain; its full sequence is Large ribosomal subunit protein uL16 (136 aa).

It belongs to the universal ribosomal protein uL16 family. As to quaternary structure, part of the 50S ribosomal subunit.

Binds 23S rRNA and is also seen to make contacts with the A and possibly P site tRNAs. This Haemophilus influenzae (strain 86-028NP) protein is Large ribosomal subunit protein uL16.